Here is a 137-residue protein sequence, read N- to C-terminus: Nucleoside diphosphate kinase (137 aa).

Residues lysine 10, phenylalanine 59, arginine 87, threonine 93, arginine 104, and asparagine 114 each coordinate ATP. Histidine 117 (pros-phosphohistidine intermediate) is an active-site residue.

Belongs to the NDK family. As to quaternary structure, homotetramer. Requires Mg(2+) as cofactor.

It is found in the cytoplasm. It carries out the reaction a 2'-deoxyribonucleoside 5'-diphosphate + ATP = a 2'-deoxyribonucleoside 5'-triphosphate + ADP. It catalyses the reaction a ribonucleoside 5'-diphosphate + ATP = a ribonucleoside 5'-triphosphate + ADP. In terms of biological role, major role in the synthesis of nucleoside triphosphates other than ATP. The ATP gamma phosphate is transferred to the NDP beta phosphate via a ping-pong mechanism, using a phosphorylated active-site intermediate. This Streptomyces avermitilis (strain ATCC 31267 / DSM 46492 / JCM 5070 / NBRC 14893 / NCIMB 12804 / NRRL 8165 / MA-4680) protein is Nucleoside diphosphate kinase.